Here is a 139-residue protein sequence, read N- to C-terminus: Putative lipoprotein LpqV (139 aa).

Positions 1–25 (MRPSRYAPLLCAMVLALAWLSAVAG) are cleaved as a signal peptide. C26 carries the N-palmitoyl cysteine lipid modification. A lipid anchor (S-diacylglycerol cysteine) is attached at C26.

Its subcellular location is the cell membrane. The polypeptide is Putative lipoprotein LpqV (lpqV) (Mycobacterium bovis (strain ATCC BAA-935 / AF2122/97)).